The primary structure comprises 440 residues: MFLAQEIIRKKRDGHALSDEEIRFFINGIRDNTISEGQIAALAMTIFFHDMTMPERVSLTMAMRDSGTVLDWKSLNLNGPIVDKHSTGGVGDVTSLMLGPMVAACGGYVPMISGRGLGHTGGTLDKLEAIPGFDIFPDDNRFREIIQDVGVAIIGQTSSLAPADKRFYATRDITATVDSIPLITGSILAKKLAEGLDALVMDVKVGSGAFMPTYELSEALAEAIVGVANGAGVRTTALLTDMNQVLASSAGNAVEVREAVQFLTGEYRNPRLFDVTMALCVEMLISGQLAKDDAEARAKLQAVLDNGKAAEVFGRMVAAQKGPSDFVENYDKYLPTAMLSKAVYADTEGFISAMDTRALGMAVVSMGGGRRQASDTIDYSVGFTDMARLGDSIDGQRPLAVIHAKDETSWQEAAKAVKAAIILDDKAPASTPSVYRRITE.

The protein belongs to the thymidine/pyrimidine-nucleoside phosphorylase family. Homodimer.

It carries out the reaction thymidine + phosphate = 2-deoxy-alpha-D-ribose 1-phosphate + thymine. Its pathway is pyrimidine metabolism; dTMP biosynthesis via salvage pathway; dTMP from thymine: step 1/2. The enzymes which catalyze the reversible phosphorolysis of pyrimidine nucleosides are involved in the degradation of these compounds and in their utilization as carbon and energy sources, or in the rescue of pyrimidine bases for nucleotide synthesis. In Salmonella agona (strain SL483), this protein is Thymidine phosphorylase.